The sequence spans 120 residues: Large ribosomal subunit protein bL17 (120 aa).

It belongs to the bacterial ribosomal protein bL17 family. As to quaternary structure, part of the 50S ribosomal subunit. Contacts protein L32.

The sequence is that of Large ribosomal subunit protein bL17 from Desulforapulum autotrophicum (strain ATCC 43914 / DSM 3382 / VKM B-1955 / HRM2) (Desulfobacterium autotrophicum).